A 570-amino-acid polypeptide reads, in one-letter code: Hydroxylamine reductase (570 aa).

4 residues coordinate [4Fe-4S] cluster: Cys5, Cys8, Cys17, and Cys23. 8 residues coordinate hybrid [4Fe-2O-2S] cluster: His266, Glu290, Cys334, Cys425, Cys453, Cys478, Glu513, and Lys515. A Cysteine persulfide modification is found at Cys425.

The protein belongs to the HCP family. [4Fe-4S] cluster serves as cofactor. It depends on hybrid [4Fe-2O-2S] cluster as a cofactor.

The protein localises to the cytoplasm. It carries out the reaction A + NH4(+) + H2O = hydroxylamine + AH2 + H(+). Its function is as follows. Catalyzes the reduction of hydroxylamine to form NH(3) and H(2)O. In Clostridium botulinum (strain Okra / Type B1), this protein is Hydroxylamine reductase.